The sequence spans 571 residues: Cationic amino acid transporter 8 (571 aa).

Asn-35 carries an N-linked (GlcNAc...) asparagine glycan. 6 helical membrane passes run 39–59 (FWLL…YFDW), 94–114 (SLYP…GFLY), 117–137 (IGPK…WVFL), 148–168 (FLSF…ILTI), 177–197 (TFIL…PATL), and 217–237 (IFLI…LMPF). 3 N-linked (GlcNAc...) asparagine glycosylation sites follow: Asn-298, Asn-325, and Asn-346. Residues 365-385 (LFFKVLLSYPSICIIVYFILF) form a helical membrane-spanning segment. N-linked (GlcNAc...) asparagine glycosylation occurs at Asn-386. The next 5 membrane-spanning stretches (helical) occupy residues 405–425 (SIIN…IIFG), 433–453 (SAII…TALI), 461–481 (VSAF…YCFI), 488–508 (VVFG…SLLC), and 528–548 (VVLL…VLYF).

This sequence belongs to the SLC43A transporter (TC 2.A.1.44) family.

The protein resides in the membrane. The enzyme catalyses L-arginine(in) = L-arginine(out). In terms of biological role, sodium-independent cationic amino acid transporter. Transports L-arginine, L-lysine, L-histidine and L-ornithine. This is Cationic amino acid transporter 8 from Plasmodium vivax (strain Salvador I).